Consider the following 95-residue polypeptide: Cytochrome b-c1 complex subunit 8, mitochondrial (95 aa).

Residues 57–74 (FLYVAIPFVVVWSIWTRA) traverse the membrane as a helical segment.

It belongs to the UQCRQ/QCR8 family. In terms of assembly, component of the ubiquinol-cytochrome c oxidoreductase (cytochrome b-c1 complex, complex III, CIII), a multisubunit enzyme composed of 10 subunits. The complex is composed of 3 respiratory subunits cytochrome b (COB), cytochrome c1 (CYT1) and Rieske protein (RIP1), 2 core protein subunits COR1 and QCR2, and 5 low-molecular weight protein subunits QCR6, QCR7, QCR8, QCR9 and QCR10. The complex exists as an obligatory dimer and forms supercomplexes (SCs) in the inner mitochondrial membrane with a monomer or a dimer of cytochrome c oxidase (complex IV, CIV), resulting in 2 different assemblies (supercomplexes III(2)IV and III(2)IV(2)).

It is found in the membrane. It localises to the mitochondrion inner membrane. Component of the ubiquinol-cytochrome c oxidoreductase, a multisubunit transmembrane complex that is part of the mitochondrial electron transport chain which drives oxidative phosphorylation. The complex plays an important role in the uptake of multiple carbon sources present in different host niches. In Candida albicans (strain SC5314 / ATCC MYA-2876) (Yeast), this protein is Cytochrome b-c1 complex subunit 8, mitochondrial.